The primary structure comprises 469 residues: Citrate synthase, mitochondrial (469 aa).

Residues 1–30 (MSFLTVSRLAPKLLNSKNATYFLVAARNAS) constitute a mitochondrion transit peptide. Catalysis depends on residues histidine 304 and histidine 350. Residue arginine 359 participates in oxaloacetate binding. Aspartate 405 is a catalytic residue. The oxaloacetate site is built by arginine 431 and arginine 451.

The protein belongs to the citrate synthase family. Homodimer.

It is found in the mitochondrion matrix. The catalysed reaction is oxaloacetate + acetyl-CoA + H2O = citrate + CoA + H(+). It functions in the pathway carbohydrate metabolism; tricarboxylic acid cycle; isocitrate from oxaloacetate: step 1/2. Functionally, key enzyme of the Krebs tricarboxylic acid cycle which catalyzes the synthesis of citrate from acetyl coenzyme A and oxaloacetate. The chain is Citrate synthase, mitochondrial (cs) from Kajikia audax (Striped marlin).